Consider the following 428-residue polypeptide: Dihydroorotase (428 aa).

H59 and H61 together coordinate Zn(2+). Substrate contacts are provided by residues 61-63 (HFR) and N93. Residues D151, H178, and H231 each coordinate Zn(2+). N277 is a substrate binding site. D304 serves as a coordination point for Zn(2+). D304 is a catalytic residue. Residues H308 and 322 to 323 (FG) each bind substrate.

It belongs to the metallo-dependent hydrolases superfamily. DHOase family. Class I DHOase subfamily. It depends on Zn(2+) as a cofactor.

The catalysed reaction is (S)-dihydroorotate + H2O = N-carbamoyl-L-aspartate + H(+). It functions in the pathway pyrimidine metabolism; UMP biosynthesis via de novo pathway; (S)-dihydroorotate from bicarbonate: step 3/3. Catalyzes the reversible cyclization of carbamoyl aspartate to dihydroorotate. In Bacillus licheniformis (strain ATCC 14580 / DSM 13 / JCM 2505 / CCUG 7422 / NBRC 12200 / NCIMB 9375 / NCTC 10341 / NRRL NRS-1264 / Gibson 46), this protein is Dihydroorotase.